Reading from the N-terminus, the 336-residue chain is Biotin synthase (336 aa).

Positions 57-286 constitute a Radical SAM core domain; the sequence is HHGKSIDLCS…RAIVRTAGGR (230 aa). Residues Cys-75, Cys-79, and Cys-82 each contribute to the [4Fe-4S] cluster site. [2Fe-2S] cluster is bound by residues Ser-119, Cys-151, Cys-211, and Arg-281.

It belongs to the radical SAM superfamily. Biotin synthase family. Homodimer. Requires [4Fe-4S] cluster as cofactor. The cofactor is [2Fe-2S] cluster.

The catalysed reaction is (4R,5S)-dethiobiotin + (sulfur carrier)-SH + 2 reduced [2Fe-2S]-[ferredoxin] + 2 S-adenosyl-L-methionine = (sulfur carrier)-H + biotin + 2 5'-deoxyadenosine + 2 L-methionine + 2 oxidized [2Fe-2S]-[ferredoxin]. It functions in the pathway cofactor biosynthesis; biotin biosynthesis; biotin from 7,8-diaminononanoate: step 2/2. Functionally, catalyzes the conversion of dethiobiotin (DTB) to biotin by the insertion of a sulfur atom into dethiobiotin via a radical-based mechanism. This is Biotin synthase from Desulfotalea psychrophila (strain LSv54 / DSM 12343).